The chain runs to 118 residues: Large ribosomal subunit protein uL18 (118 aa).

It belongs to the universal ribosomal protein uL18 family. As to quaternary structure, part of the 50S ribosomal subunit; part of the 5S rRNA/L5/L18/L25 subcomplex. Contacts the 5S and 23S rRNAs.

This is one of the proteins that bind and probably mediate the attachment of the 5S RNA into the large ribosomal subunit, where it forms part of the central protuberance. The chain is Large ribosomal subunit protein uL18 from Nitratiruptor sp. (strain SB155-2).